A 367-amino-acid chain; its full sequence is Phosphoribosylaminoimidazole-succinocarboxamide synthase (367 aa).

Belongs to the SAICAR synthetase family.

It carries out the reaction 5-amino-1-(5-phospho-D-ribosyl)imidazole-4-carboxylate + L-aspartate + ATP = (2S)-2-[5-amino-1-(5-phospho-beta-D-ribosyl)imidazole-4-carboxamido]succinate + ADP + phosphate + 2 H(+). The protein operates within purine metabolism; IMP biosynthesis via de novo pathway; 5-amino-1-(5-phospho-D-ribosyl)imidazole-4-carboxamide from 5-amino-1-(5-phospho-D-ribosyl)imidazole-4-carboxylate: step 1/2. The protein is Phosphoribosylaminoimidazole-succinocarboxamide synthase of Shewanella sp. (strain MR-4).